The following is a 215-amino-acid chain: Cytochrome b6 (215 aa).

Residues 32-52 traverse the membrane as a helical segment; the sequence is IFYCLGGITFTCFIIQVATGF. Heme c is bound at residue Cys35. Residues His86 and His100 each contribute to the heme b site. 3 helical membrane-spanning segments follow: residues 90 to 110, 116 to 136, and 186 to 206; these read ASMM…TGGF, LTWV…VTGY, and LHTF…FLMI. Residues His187 and His202 each coordinate heme b.

The protein belongs to the cytochrome b family. PetB subfamily. As to quaternary structure, the 4 large subunits of the cytochrome b6-f complex are cytochrome b6, subunit IV (17 kDa polypeptide, PetD), cytochrome f and the Rieske protein, while the 4 small subunits are PetG, PetL, PetM and PetN. The complex functions as a dimer. The cofactor is heme b. It depends on heme c as a cofactor.

The protein localises to the plastid. It is found in the chloroplast thylakoid membrane. Its function is as follows. Component of the cytochrome b6-f complex, which mediates electron transfer between photosystem II (PSII) and photosystem I (PSI), cyclic electron flow around PSI, and state transitions. The protein is Cytochrome b6 of Euglena gracilis.